Consider the following 397-residue polypeptide: Tryptophan synthase beta chain 1 (397 aa).

Lysine 94 carries the N6-(pyridoxal phosphate)lysine modification.

This sequence belongs to the TrpB family. As to quaternary structure, tetramer of two alpha and two beta chains. Requires pyridoxal 5'-phosphate as cofactor.

The catalysed reaction is (1S,2R)-1-C-(indol-3-yl)glycerol 3-phosphate + L-serine = D-glyceraldehyde 3-phosphate + L-tryptophan + H2O. It functions in the pathway amino-acid biosynthesis; L-tryptophan biosynthesis; L-tryptophan from chorismate: step 5/5. Its function is as follows. The beta subunit is responsible for the synthesis of L-tryptophan from indole and L-serine. The chain is Tryptophan synthase beta chain 1 (trpB1) from Archaeoglobus fulgidus (strain ATCC 49558 / DSM 4304 / JCM 9628 / NBRC 100126 / VC-16).